Here is a 131-residue protein sequence, read N- to C-terminus: Neurophysin 2 (131 aa).

7 disulfide bridges follow: Cys10-Cys55, Cys13-Cys27, Cys21-Cys45, Cys28-Cys35, Cys62-Cys74, Cys68-Cys86, and Cys75-Cys80.

The protein belongs to the vasopressin/oxytocin family.

It is found in the secreted. Functionally, neurophysin 2 specifically binds vasopressin. This is Neurophysin 2 from Anser anser anser (Western greylag goose).